Consider the following 301-residue polypeptide: NADH-cytochrome b5 reductase 3 (301 aa).

A lipid anchor (N-myristoyl glycine) is attached at glycine 2. The 113-residue stretch at 40–152 (DIKYPLRLID…RGPSGLLVYQ (113 aa)) folds into the FAD-binding FR-type domain. Lysine 42 carries the N6-acetyllysine modification. Tyrosine 43 carries the post-translational modification Phosphotyrosine. The FAD site is built by arginine 92, proline 93, tyrosine 94, valine 109, lysine 111, and phenylalanine 114. Position 120 is an N6-acetyllysine (lysine 120). Positions 126, 127, 128, and 185 each coordinate FAD.

This sequence belongs to the flavoprotein pyridine nucleotide cytochrome reductase family. In terms of assembly, component of a complex composed of cytochrome b5, NADH-cytochrome b5 reductase (CYB5R3) and MTARC2. Interacts with MTLN; the interaction is required to maintain cellular lipid composition and leads to stimulation of mitochondrial respiratory complex I activity. The cofactor is FAD. In terms of tissue distribution, expressed at late stages of erythroid maturation.

It is found in the endoplasmic reticulum membrane. The protein resides in the mitochondrion outer membrane. It localises to the cytoplasm. The enzyme catalyses 2 Fe(III)-[cytochrome b5] + NADH = 2 Fe(II)-[cytochrome b5] + NAD(+) + H(+). Functionally, catalyzes the reduction of two molecules of cytochrome b5 using NADH as the electron donor. This chain is NADH-cytochrome b5 reductase 3, found in Homo sapiens (Human).